The sequence spans 529 residues: Phosphoenolpyruvate carboxykinase (ATP) (529 aa).

R60, Y195, and K201 together coordinate substrate. ATP-binding positions include K201, H220, and 236–244; that span reads GLSGTGKTT. Mn(2+) is bound by residues K201 and H220. D257 is a binding site for Mn(2+). ATP contacts are provided by E285, R323, and S448. A substrate-binding site is contributed by R323.

Belongs to the phosphoenolpyruvate carboxykinase (ATP) family. Requires Mn(2+) as cofactor.

The protein resides in the cytoplasm. It carries out the reaction oxaloacetate + ATP = phosphoenolpyruvate + ADP + CO2. Its pathway is carbohydrate biosynthesis; gluconeogenesis. Functionally, involved in the gluconeogenesis. Catalyzes the conversion of oxaloacetate (OAA) to phosphoenolpyruvate (PEP) through direct phosphoryl transfer between the nucleoside triphosphate and OAA. This Geobacter sp. (strain M21) protein is Phosphoenolpyruvate carboxykinase (ATP).